Reading from the N-terminus, the 692-residue chain is Elongation factor G (692 aa).

One can recognise a tr-type G domain in the interval 8–282 (EKTRNIGIMA…AVLDYLPAPT (275 aa)). GTP contacts are provided by residues 17–24 (AHIDAGKT), 81–85 (DTPGH), and 135–138 (NKMD).

This sequence belongs to the TRAFAC class translation factor GTPase superfamily. Classic translation factor GTPase family. EF-G/EF-2 subfamily.

It localises to the cytoplasm. Its function is as follows. Catalyzes the GTP-dependent ribosomal translocation step during translation elongation. During this step, the ribosome changes from the pre-translocational (PRE) to the post-translocational (POST) state as the newly formed A-site-bound peptidyl-tRNA and P-site-bound deacylated tRNA move to the P and E sites, respectively. Catalyzes the coordinated movement of the two tRNA molecules, the mRNA and conformational changes in the ribosome. The chain is Elongation factor G from Bacillus licheniformis (strain ATCC 14580 / DSM 13 / JCM 2505 / CCUG 7422 / NBRC 12200 / NCIMB 9375 / NCTC 10341 / NRRL NRS-1264 / Gibson 46).